A 160-amino-acid polypeptide reads, in one-letter code: MSGQVTLQSSDSVDITVERAVAERSMLIKNLLEDLGESEEPVPIPNVNESVLKKVIEWCTHHKNDPQSTGEDDDNRRRTTEIDEWDQKFMQVDQEMLFEIILAANYLDIKALLDVGCKTVANMIKGKSPEEIRKTFNIQNDFTPEEEDQIRRENEWAEDR.

Residues 101 to 160 are interaction with the F-box domain of F-box proteins; it reads ILAANYLDIKALLDVGCKTVANMIKGKSPEEIRKTFNIQNDFTPEEEDQIRRENEWAEDR.

It belongs to the SKP1 family. Component of the SCF (SKP1-CUL1-F-box protein) E3 ubiquitin ligase complexes.

It functions in the pathway protein modification; protein ubiquitination. Essential component of the SCF (SKP1-CUL1-F-box protein) E3 ubiquitin ligase complexes, which mediate the ubiquitination and subsequent proteasomal degradation of target proteins. Controls sulfur metabolite repression, probably by mediating the inactivation or degradation of the metR transcription factor. The sequence is that of E3 ubiquitin ligase complex SCF subunit sconC (sconC) from Talaromyces marneffei (strain ATCC 18224 / CBS 334.59 / QM 7333) (Penicillium marneffei).